The chain runs to 392 residues: 1-deoxy-D-xylulose 5-phosphate reductoisomerase (392 aa).

Residues Thr10, Gly11, Ser12, Ile13, Asn38, and Asn124 each coordinate NADPH. Residue Lys125 coordinates 1-deoxy-D-xylulose 5-phosphate. Glu126 lines the NADPH pocket. Asp150 serves as a coordination point for Mn(2+). Positions 151, 152, 176, and 199 each coordinate 1-deoxy-D-xylulose 5-phosphate. Residue Glu152 participates in Mn(2+) binding. Gly205 contributes to the NADPH binding site. 1-deoxy-D-xylulose 5-phosphate-binding residues include Ser212, Asn217, Lys218, and Glu221. Glu221 is a binding site for Mn(2+).

The protein belongs to the DXR family. Mg(2+) is required as a cofactor. Mn(2+) serves as cofactor.

It catalyses the reaction 2-C-methyl-D-erythritol 4-phosphate + NADP(+) = 1-deoxy-D-xylulose 5-phosphate + NADPH + H(+). It functions in the pathway isoprenoid biosynthesis; isopentenyl diphosphate biosynthesis via DXP pathway; isopentenyl diphosphate from 1-deoxy-D-xylulose 5-phosphate: step 1/6. In terms of biological role, catalyzes the NADPH-dependent rearrangement and reduction of 1-deoxy-D-xylulose-5-phosphate (DXP) to 2-C-methyl-D-erythritol 4-phosphate (MEP). This is 1-deoxy-D-xylulose 5-phosphate reductoisomerase from Synechococcus sp. (strain JA-2-3B'a(2-13)) (Cyanobacteria bacterium Yellowstone B-Prime).